The chain runs to 211 residues: uncharacterized protein (211 aa).

At 1–33 (MQNGTEDKSNIPARSNDDVLPPLAVRLTMKVMR) the chain is on the cytoplasmic side. Residues 34-54 (LIFIGKMFAYSFVPFPPFKLL) traverse the membrane as a helical segment. Residues 55–58 (TFDN) lie on the Lumenal side of the membrane. The helical transmembrane segment at 59-79 (TVGWFVAYSAIVSIWGFAVWM) threads the bilayer. Residues 80–116 (ERGYRHKINLLPPRCTKIRCSRCNTRIRSPNWFKYKN) are Cytoplasmic-facing. Residues 117–137 (WLYFFLLYVSLTTSNLIIQLA) traverse the membrane as a helical segment. At 138 to 162 (SFMTEMSRRGISVPGTKDPGKRDYL) the chain is on the lumenal side. A helical membrane pass occupies residues 163–183 (GLIIPMRFIGAFIHYMTANLF). Over 184–211 (KEYYLHNGPLEKNDRPSTDEKTSENETL) the chain is Cytoplasmic.

The protein localises to the endoplasmic reticulum membrane. This is an uncharacterized protein from Saccharomyces cerevisiae (strain ATCC 204508 / S288c) (Baker's yeast).